The sequence spans 199 residues: Pyridoxine/pyridoxamine 5'-phosphate oxidase (199 aa).

FMN is bound by residues 44–49 (RTVLLK), 59–60 (YT), Lys66, and Gln91. Lys49 lines the substrate pocket. Substrate contacts are provided by Tyr109, Arg113, and Ser117. Residues 126 to 127 (QS) and Trp171 each bind FMN. Residue 177–179 (RLH) participates in substrate binding. Arg181 lines the FMN pocket.

This sequence belongs to the pyridoxamine 5'-phosphate oxidase family. In terms of assembly, homodimer. FMN is required as a cofactor.

The catalysed reaction is pyridoxamine 5'-phosphate + O2 + H2O = pyridoxal 5'-phosphate + H2O2 + NH4(+). It catalyses the reaction pyridoxine 5'-phosphate + O2 = pyridoxal 5'-phosphate + H2O2. The protein operates within cofactor metabolism; pyridoxal 5'-phosphate salvage; pyridoxal 5'-phosphate from pyridoxamine 5'-phosphate: step 1/1. It functions in the pathway cofactor metabolism; pyridoxal 5'-phosphate salvage; pyridoxal 5'-phosphate from pyridoxine 5'-phosphate: step 1/1. Its function is as follows. Catalyzes the oxidation of either pyridoxine 5'-phosphate (PNP) or pyridoxamine 5'-phosphate (PMP) into pyridoxal 5'-phosphate (PLP). This is Pyridoxine/pyridoxamine 5'-phosphate oxidase from Xanthomonas campestris pv. campestris (strain 8004).